A 498-amino-acid polypeptide reads, in one-letter code: ATP synthase subunit beta, chloroplastic (498 aa).

Threonine 6 bears the Phosphothreonine mark. A Phosphoserine modification is found at serine 13. 172–179 (GGAGVGKT) is a binding site for ATP.

The protein belongs to the ATPase alpha/beta chains family. F-type ATPases have 2 components, CF(1) - the catalytic core - and CF(0) - the membrane proton channel. CF(1) has five subunits: alpha(3), beta(3), gamma(1), delta(1), epsilon(1). CF(0) has four main subunits: a(1), b(1), b'(1) and c(9-12).

It is found in the plastid. The protein resides in the chloroplast thylakoid membrane. It carries out the reaction ATP + H2O + 4 H(+)(in) = ADP + phosphate + 5 H(+)(out). Functionally, produces ATP from ADP in the presence of a proton gradient across the membrane. The catalytic sites are hosted primarily by the beta subunits. This chain is ATP synthase subunit beta, chloroplastic, found in Arabis hirsuta (Hairy rock-cress).